The chain runs to 234 residues: Large ribosomal subunit protein uL1 (234 aa).

The protein belongs to the universal ribosomal protein uL1 family. Part of the 50S ribosomal subunit.

Binds directly to 23S rRNA. The L1 stalk is quite mobile in the ribosome, and is involved in E site tRNA release. In terms of biological role, protein L1 is also a translational repressor protein, it controls the translation of the L11 operon by binding to its mRNA. This chain is Large ribosomal subunit protein uL1, found in Helicobacter pylori (strain Shi470).